The sequence spans 129 residues: MRLHLLKSKIHNAIVTSGDLEYEGSITIDSQLLELADMLPNEKVLCVNNNNGERFETYIIKGKAGSREIQLNGAAARCALPGDEIIIMTFAEIEAEKAKDFKPMILIVDHQNNPKRRHLVGEEDTPLPH.

Ser25 acts as the Schiff-base intermediate with substrate; via pyruvic acid in catalysis. At Ser25 the chain carries Pyruvic acid (Ser). A substrate-binding site is contributed by Thr57. Tyr58 functions as the Proton donor in the catalytic mechanism. 73–75 (GAA) provides a ligand contact to substrate.

Belongs to the PanD family. In terms of assembly, heterooctamer of four alpha and four beta subunits. Pyruvate is required as a cofactor. Post-translationally, is synthesized initially as an inactive proenzyme, which is activated by self-cleavage at a specific serine bond to produce a beta-subunit with a hydroxyl group at its C-terminus and an alpha-subunit with a pyruvoyl group at its N-terminus.

The protein localises to the cytoplasm. The catalysed reaction is L-aspartate + H(+) = beta-alanine + CO2. The protein operates within cofactor biosynthesis; (R)-pantothenate biosynthesis; beta-alanine from L-aspartate: step 1/1. Its function is as follows. Catalyzes the pyruvoyl-dependent decarboxylation of aspartate to produce beta-alanine. This chain is Aspartate 1-decarboxylase, found in Prosthecochloris aestuarii (strain DSM 271 / SK 413).